The sequence spans 571 residues: Proline--tRNA ligase (571 aa).

The protein belongs to the class-II aminoacyl-tRNA synthetase family. ProS type 1 subfamily. Homodimer.

Its subcellular location is the cytoplasm. The enzyme catalyses tRNA(Pro) + L-proline + ATP = L-prolyl-tRNA(Pro) + AMP + diphosphate. Functionally, catalyzes the attachment of proline to tRNA(Pro) in a two-step reaction: proline is first activated by ATP to form Pro-AMP and then transferred to the acceptor end of tRNA(Pro). As ProRS can inadvertently accommodate and process non-cognate amino acids such as alanine and cysteine, to avoid such errors it has two additional distinct editing activities against alanine. One activity is designated as 'pretransfer' editing and involves the tRNA(Pro)-independent hydrolysis of activated Ala-AMP. The other activity is designated 'posttransfer' editing and involves deacylation of mischarged Ala-tRNA(Pro). The misacylated Cys-tRNA(Pro) is not edited by ProRS. This Acinetobacter baumannii (strain AB307-0294) protein is Proline--tRNA ligase.